The primary structure comprises 108 residues: UPF0060 membrane protein RER_49640 (108 aa).

The next 4 helical transmembrane spans lie at Leu8 to Ile28, Gly33 to Met53, Ile62 to Asp82, and Asp87 to Ala107.

The protein belongs to the UPF0060 family.

Its subcellular location is the cell membrane. The chain is UPF0060 membrane protein RER_49640 from Rhodococcus erythropolis (strain PR4 / NBRC 100887).